Reading from the N-terminus, the 312-residue chain is Cytoplasmic dynein intermediate light chain DYN3 (312 aa).

It belongs to the dynein light intermediate chain DYN3 family. The dynein complex consists of at least two heavy chains and a number of intermediate and light chains. Interacts with DYN1.

The protein resides in the cytoplasm. It localises to the cytoskeleton. Component of the cytoplasmic dynein which acts as a motor for the intracellular retrograde motility of vesicles and organelles along microtubules. May play an important role in the proper orientation of the mitotic spindle into the budding daughter cell yeast. Probably required for normal progression of the cell cycle. This Saccharomyces cerevisiae (strain ATCC 204508 / S288c) (Baker's yeast) protein is Cytoplasmic dynein intermediate light chain DYN3 (DYN3).